Consider the following 537-residue polypeptide: Phosphoenolpyruvate carboxykinase (ATP) (537 aa).

Substrate contacts are provided by R61, Y195, and K201. Residues K201, H220, and 236–244 (GLSGTGKTT) each bind ATP. Mn(2+) contacts are provided by K201 and H220. D257 contributes to the Mn(2+) binding site. E285 is an ATP binding site. Residues 311–321 (PDFDNGSKTEN) are compositionally biased toward basic and acidic residues. A disordered region spans residues 311 to 342 (PDFDNGSKTENTRSAYPLESIPNASPTGRAGQ). A substrate-binding site is contributed by R323. Positions 323 and 448 each coordinate ATP.

The protein belongs to the phosphoenolpyruvate carboxykinase (ATP) family. Mn(2+) is required as a cofactor.

It is found in the cytoplasm. It catalyses the reaction oxaloacetate + ATP = phosphoenolpyruvate + ADP + CO2. It participates in carbohydrate biosynthesis; gluconeogenesis. Its function is as follows. Involved in the gluconeogenesis. Catalyzes the conversion of oxaloacetate (OAA) to phosphoenolpyruvate (PEP) through direct phosphoryl transfer between the nucleoside triphosphate and OAA. This is Phosphoenolpyruvate carboxykinase (ATP) from Rhodopseudomonas palustris (strain BisB5).